Here is a 238-residue protein sequence, read N- to C-terminus: Ribosomal RNA small subunit methyltransferase G (238 aa).

Residues G78, F83, 129 to 130 (AE), and R148 contribute to the S-adenosyl-L-methionine site. Positions 217–238 (KKKETPKKYPRKAGTPAKSPIK) are disordered.

This sequence belongs to the methyltransferase superfamily. RNA methyltransferase RsmG family.

It is found in the cytoplasm. In terms of biological role, specifically methylates the N7 position of a guanine in 16S rRNA. The polypeptide is Ribosomal RNA small subunit methyltransferase G (Lactococcus lactis subsp. cremoris (strain MG1363)).